Consider the following 429-residue polypeptide: UDP-N-acetylglucosamine 1-carboxyvinyltransferase (429 aa).

22–23 (KN) provides a ligand contact to phosphoenolpyruvate. Position 102 (R102) interacts with UDP-N-acetyl-alpha-D-glucosamine. Residue C126 is the Proton donor of the active site. C126 carries the 2-(S-cysteinyl)pyruvic acid O-phosphothioketal modification. UDP-N-acetyl-alpha-D-glucosamine contacts are provided by residues 131–135 (RPVDL), D316, and I338.

It belongs to the EPSP synthase family. MurA subfamily.

It localises to the cytoplasm. It carries out the reaction phosphoenolpyruvate + UDP-N-acetyl-alpha-D-glucosamine = UDP-N-acetyl-3-O-(1-carboxyvinyl)-alpha-D-glucosamine + phosphate. The protein operates within cell wall biogenesis; peptidoglycan biosynthesis. In terms of biological role, cell wall formation. Adds enolpyruvyl to UDP-N-acetylglucosamine. The sequence is that of UDP-N-acetylglucosamine 1-carboxyvinyltransferase from Rhodopseudomonas palustris (strain TIE-1).